Consider the following 209-residue polypeptide: Protease (209 aa).

Catalysis depends on residues H60, D77, and C127.

Belongs to the peptidase C5 family. Interacts with protease cofactor pVI-C; this interaction is necessary for protease activation.

The protein localises to the virion. The protein resides in the host nucleus. It carries out the reaction Cleaves proteins of the adenovirus and its host cell at two consensus sites: -Yaa-Xaa-Gly-Gly-|-Xaa- and -Yaa-Xaa-Gly-Xaa-|-Gly- (in which Yaa is Met, Ile or Leu, and Xaa is any amino acid).. Its activity is regulated as follows. Requires DNA and protease cofactor for maximal activation. Inside nascent virions, becomes partially activated by binding to the viral DNA, allowing it to cleave the cofactor that binds to the protease and fully activates it. Actin, like the viral protease cofactor, seems to act as a cofactor in the cleavage of cytokeratin 18 and of actin itself. Its function is as follows. Cleaves viral precursor proteins (pTP, pIIIa, pVI, pVII, pVIII, and pX) inside newly assembled particles giving rise to mature virions. Protease complexed to its cofactor slides along the viral DNA to specifically locate and cleave the viral precursors. Mature virions have a weakened organization compared to the unmature virions, thereby facilitating subsequent uncoating. Without maturation, the particle lacks infectivity and is unable to uncoat. Late in adenovirus infection, in the cytoplasm, may participate in the cytoskeleton destruction. Cleaves host cell cytoskeletal keratins K7 and K18. This Homo sapiens (Human) protein is Protease.